The chain runs to 57 residues: Small ribosomal subunit protein eS27 (57 aa).

Residues C10, C13, C29, and C32 each coordinate Zn(2+). Residues 10–32 (CDDCENEQVLFGKAANTVNCAVC) form a C4-type zinc finger.

Belongs to the eukaryotic ribosomal protein eS27 family. Part of the 30S ribosomal subunit. Zn(2+) is required as a cofactor.

The sequence is that of Small ribosomal subunit protein eS27 from Natronomonas pharaonis (strain ATCC 35678 / DSM 2160 / CIP 103997 / JCM 8858 / NBRC 14720 / NCIMB 2260 / Gabara) (Halobacterium pharaonis).